A 702-amino-acid polypeptide reads, in one-letter code: Ribosomal RNA large subunit methyltransferase K/L (702 aa).

Residues Leu43–Leu154 enclose the THUMP domain.

This sequence belongs to the methyltransferase superfamily. RlmKL family.

The protein localises to the cytoplasm. The catalysed reaction is guanosine(2445) in 23S rRNA + S-adenosyl-L-methionine = N(2)-methylguanosine(2445) in 23S rRNA + S-adenosyl-L-homocysteine + H(+). The enzyme catalyses guanosine(2069) in 23S rRNA + S-adenosyl-L-methionine = N(2)-methylguanosine(2069) in 23S rRNA + S-adenosyl-L-homocysteine + H(+). Specifically methylates the guanine in position 2445 (m2G2445) and the guanine in position 2069 (m7G2069) of 23S rRNA. This chain is Ribosomal RNA large subunit methyltransferase K/L, found in Escherichia coli (strain SMS-3-5 / SECEC).